The sequence spans 274 residues: Penicillin-insensitive murein endopeptidase (274 aa).

The first 19 residues, 1–19, serve as a signal peptide directing secretion; that stretch reads MNKTAIALLALLASSASLA. 3 disulfide bridges follow: Cys-44–Cys-265, Cys-187–Cys-235, and Cys-216–Cys-223. Residues His-110, His-113, Asp-120, Asp-147, His-150, and His-211 each coordinate Zn(2+). The disordered stretch occupies residues 227–274; the sequence is PLPPPGDGCGAELQSWFEPPKPGTTKPEKKTPPPLPPSCQALLDEHVI.

Belongs to the peptidase M74 family. Dimer. Zn(2+) serves as cofactor.

Its subcellular location is the periplasm. In terms of biological role, murein endopeptidase that cleaves the D-alanyl-meso-2,6-diamino-pimelyl amide bond that connects peptidoglycan strands. Likely plays a role in the removal of murein from the sacculus. The chain is Penicillin-insensitive murein endopeptidase from Escherichia coli O17:K52:H18 (strain UMN026 / ExPEC).